The following is a 151-amino-acid chain: 3-dehydroquinate dehydratase (151 aa).

Catalysis depends on Y26, which acts as the Proton acceptor. N75, H81, and D88 together coordinate substrate. The active-site Proton donor is H101. Residues 102–103 (LS) and R112 each bind substrate.

It belongs to the type-II 3-dehydroquinase family. As to quaternary structure, homododecamer.

The enzyme catalyses 3-dehydroquinate = 3-dehydroshikimate + H2O. It functions in the pathway metabolic intermediate biosynthesis; chorismate biosynthesis; chorismate from D-erythrose 4-phosphate and phosphoenolpyruvate: step 3/7. In terms of biological role, catalyzes a trans-dehydration via an enolate intermediate. The sequence is that of 3-dehydroquinate dehydratase from Shewanella halifaxensis (strain HAW-EB4).